Consider the following 233-residue polypeptide: 7-cyano-7-deazaguanine synthase (233 aa).

7-17 (LSGGLDSAVTS) contacts ATP. Zn(2+)-binding residues include cysteine 195, cysteine 206, cysteine 209, and cysteine 212.

Belongs to the QueC family. Requires Zn(2+) as cofactor.

It carries out the reaction 7-carboxy-7-deazaguanine + NH4(+) + ATP = 7-cyano-7-deazaguanine + ADP + phosphate + H2O + H(+). Its pathway is purine metabolism; 7-cyano-7-deazaguanine biosynthesis. Catalyzes the ATP-dependent conversion of 7-carboxy-7-deazaguanine (CDG) to 7-cyano-7-deazaguanine (preQ(0)). The polypeptide is 7-cyano-7-deazaguanine synthase (Methanococcus maripaludis (strain C5 / ATCC BAA-1333)).